The following is a 406-amino-acid chain: O-glycosyltransferase PaGT (406 aa).

The disordered stretch occupies residues 1–26 (MSPPSQIKPPQGTTPVPPSELDPRSD).

This sequence belongs to the afumC glycosyltransferase family.

It participates in mycotoxin biosynthesis. In terms of biological role, O-glycosyltransferase; part of the 2 gene clusters that mediate the biosynthesis of fusicoccins, diterpene glucosides that display phytohormone-like activity and function as potent activators of plasma membrane H(+)-ATPases in plants by modifying 14-3-3 proteins and cause the plant disease constriction canker. The first step in the pathway is performed by the fusicoccadiene synthase PaFS that possesses both prenyl transferase and terpene cyclase activity, converting isopentenyl diphosphate and dimethylallyl diphosphate into geranylgeranyl diphosphate (GGDP) and successively converting GGDP into fusicocca-2,10(14)-diene, a precursor for fusicoccin H. The second step is the oxidation at the C-8 position by the cytochrome P450 monooxygenase PaP450-2 to yield fusicocca-2,10(14)-diene-8-beta-ol. The cytochrome P450 monooxygenase PaP450-1 then catalyzes the hydroxylation at the C-16 position to produce fusicocca-2,10(14)-diene-8-beta,16-diol. The dioxygenase fc-dox then catalyzes the 16-oxydation of fusicocca-2,10(14)-diene-8-beta,16-diol to yield an aldehyde (8-beta-hydroxyfusicocca-1,10(14)-dien-16-al). The short-chain dehydrogenase/reductase fc-sdr catalyzes the reduction of the aldehyde to yield fusicocca-1,10(14)-diene-8-beta,16-diol. The next step is the hydroxylation at C-9 performed by the cytochrome P450 monooxygenase PaP450-3 that leads to fusicoccin H aglycon which is glycosylated to fusicoccin H by the O-glycosyltransferase PaGT. Hydroxylation at C-12 by the cytochrome P450 monooxygenase PaP450-4 leads then to the production of fusicoccin Q and is followed by methylation by the O-methyltransferase PaMT to yield fusicoccin P. Fusicoccin P is further converted to fusicoccin J via prenylation by the O-glucose prenyltransferase PaPT. Cytochrome P450 monooxygenase PaP450-5 then performs hydroxylation at C-19 to yield dideacetyl-fusicoccin A which is acetylated to 3'-O-deacetyl-fusicoccin A by the O-acetyltransferase PaAT-2. Finally, a another acetylation by the O-acetyltransferase PaAT-1 yields fusicoccin A. In Phomopsis amygdali (Fusicoccum amygdali), this protein is O-glycosyltransferase PaGT.